Consider the following 130-residue polypeptide: MVKNSSVRTRKRVKKQITDGIAHIHASFNNTIVTITDRQGNALGWATSGGSGFRGSRKSTPFAAQIAAERCAEIVKDYGIKNLEVMVKGPGPGRESTIRALNAAGFRITNITDVTPIPHNGCRPPKKRRV.

It belongs to the universal ribosomal protein uS11 family. Part of the 30S ribosomal subunit. Interacts with proteins S7 and S18. Binds to IF-3.

Its function is as follows. Located on the platform of the 30S subunit, it bridges several disparate RNA helices of the 16S rRNA. Forms part of the Shine-Dalgarno cleft in the 70S ribosome. This Buchnera aphidicola subsp. Schizaphis graminum (strain Sg) protein is Small ribosomal subunit protein uS11.